The sequence spans 313 residues: tRNA dimethylallyltransferase (313 aa).

Gly-9–Thr-16 contacts ATP. Thr-11–Thr-16 provides a ligand contact to substrate. Residues Asp-34 to Gln-37 are interaction with substrate tRNA.

Belongs to the IPP transferase family. As to quaternary structure, monomer. Requires Mg(2+) as cofactor.

It carries out the reaction adenosine(37) in tRNA + dimethylallyl diphosphate = N(6)-dimethylallyladenosine(37) in tRNA + diphosphate. Functionally, catalyzes the transfer of a dimethylallyl group onto the adenine at position 37 in tRNAs that read codons beginning with uridine, leading to the formation of N6-(dimethylallyl)adenosine (i(6)A). This is tRNA dimethylallyltransferase from Lachnoclostridium phytofermentans (strain ATCC 700394 / DSM 18823 / ISDg) (Clostridium phytofermentans).